Reading from the N-terminus, the 418-residue chain is Light-independent protochlorophyllide reductase subunit N (418 aa).

[4Fe-4S] cluster contacts are provided by Cys17, Cys42, and Cys103.

It belongs to the BchN/ChlN family. In terms of assembly, protochlorophyllide reductase is composed of three subunits; ChlL, ChlN and ChlB. Forms a heterotetramer of two ChlB and two ChlN subunits. Requires [4Fe-4S] cluster as cofactor.

It catalyses the reaction chlorophyllide a + oxidized 2[4Fe-4S]-[ferredoxin] + 2 ADP + 2 phosphate = protochlorophyllide a + reduced 2[4Fe-4S]-[ferredoxin] + 2 ATP + 2 H2O. It participates in porphyrin-containing compound metabolism; chlorophyll biosynthesis (light-independent). In terms of biological role, component of the dark-operative protochlorophyllide reductase (DPOR) that uses Mg-ATP and reduced ferredoxin to reduce ring D of protochlorophyllide (Pchlide) to form chlorophyllide a (Chlide). This reaction is light-independent. The NB-protein (ChlN-ChlB) is the catalytic component of the complex. The sequence is that of Light-independent protochlorophyllide reductase subunit N from Prochlorococcus marinus (strain MIT 9211).